Here is a 122-residue protein sequence, read N- to C-terminus: LYR motif-containing protein 1 (122 aa).

It belongs to the complex I LYR family.

Its function is as follows. May promote cell proliferation and inhibition of apoptosis of preadipocytes. The chain is LYR motif-containing protein 1 (Lyrm1) from Rattus norvegicus (Rat).